Consider the following 235-residue polypeptide: 2,3-bisphosphoglycerate-dependent phosphoglycerate mutase 1 (235 aa).

Substrate-binding positions include 8 to 15 (RHGESVAN), 21 to 22 (TG), R60, 87 to 90 (ERHY), K98, and 114 to 115 (RR). Residue H9 is the Tele-phosphohistidine intermediate of the active site. The active-site Proton donor/acceptor is the E87.

Belongs to the phosphoglycerate mutase family. BPG-dependent PGAM subfamily.

It catalyses the reaction (2R)-2-phosphoglycerate = (2R)-3-phosphoglycerate. The protein operates within carbohydrate degradation; glycolysis; pyruvate from D-glyceraldehyde 3-phosphate: step 3/5. In terms of biological role, catalyzes the interconversion of 2-phosphoglycerate and 3-phosphoglycerate. The polypeptide is 2,3-bisphosphoglycerate-dependent phosphoglycerate mutase 1 (Latilactobacillus sakei subsp. sakei (strain 23K) (Lactobacillus sakei subsp. sakei)).